Here is a 326-residue protein sequence, read N- to C-terminus: uncharacterized protein (326 aa).

3 Solcar repeats span residues 20–107 (QDSN…CKKK), 120–219 (LTNT…LREF), and 231–322 (KSNL…VCDS). 6 helical membrane-spanning segments follow: residues 24–40 (IAFL…RTVV), 84–104 (GLNC…YEAC), 126–143 (LFSG…TYPL), 195–213 (VWPT…FAVY), 237–254 (LTIG…TYPF), and 297–316 (GLAA…WLVY).

This sequence belongs to the mitochondrial carrier (TC 2.A.29) family.

It is found in the mitochondrion inner membrane. This is an uncharacterized protein from Saccharomyces cerevisiae (strain ATCC 204508 / S288c) (Baker's yeast).